A 243-amino-acid polypeptide reads, in one-letter code: Tryptophan synthase alpha chain (243 aa).

Catalysis depends on proton acceptor residues Glu-31 and Asp-42.

Belongs to the TrpA family. Tetramer of two alpha and two beta chains.

The enzyme catalyses (1S,2R)-1-C-(indol-3-yl)glycerol 3-phosphate + L-serine = D-glyceraldehyde 3-phosphate + L-tryptophan + H2O. Its pathway is amino-acid biosynthesis; L-tryptophan biosynthesis; L-tryptophan from chorismate: step 5/5. The alpha subunit is responsible for the aldol cleavage of indoleglycerol phosphate to indole and glyceraldehyde 3-phosphate. This chain is Tryptophan synthase alpha chain, found in Staphylococcus haemolyticus (strain JCSC1435).